Consider the following 244-residue polypeptide: Ureidoacrylate amidohydrolase RutB (244 aa).

Asp38 (proton acceptor) is an active-site residue. Lys147 is a catalytic residue. Catalysis depends on Cys180, which acts as the Nucleophile.

It belongs to the isochorismatase family. RutB subfamily.

The enzyme catalyses (Z)-3-ureidoacrylate + H2O + H(+) = (Z)-3-aminoacrylate + NH4(+) + CO2. The catalysed reaction is (Z)-3-ureidoacrylate + H2O = (Z)-3-aminoacrylate + carbamate + H(+). It carries out the reaction (Z)-2-methylureidoacrylate + H2O + H(+) = (Z)-2-methylaminoacrylate + NH4(+) + CO2. Hydrolyzes ureidoacrylate to form aminoacrylate and carbamate. The carbamate hydrolyzes spontaneously, thereby releasing one of the nitrogen atoms of the pyrimidine ring as ammonia and one of its carbon atoms as CO2. In Escherichia coli O55:H7 (strain CB9615 / EPEC), this protein is Ureidoacrylate amidohydrolase RutB.